A 357-amino-acid chain; its full sequence is Cinnamyl alcohol dehydrogenase 1 (357 aa).

An Enoyl reductase (ER) domain is found at 20 to 348; it reads GILSPYTYTL…KNDVRYRFVV (329 aa). C47 is a Zn(2+) binding site. S49 contributes to the NADP(+) binding site. H69, E70, C100, C103, C106, C114, and C163 together coordinate Zn(2+). NADP(+) is bound by residues T167, 188–193, 211–216, T251, G275, and 298–300; these read GLGGVG, SSSDKK, and SFI.

It belongs to the zinc-containing alcohol dehydrogenase family. In terms of assembly, homodimer. Requires Zn(2+) as cofactor. In terms of tissue distribution, accumulates mainly in the placenta of red fruits, and, to a lower extent, in green fruits placenta, pericarp and seeds.

It localises to the cytoplasm. It carries out the reaction (E)-cinnamyl alcohol + NADP(+) = (E)-cinnamaldehyde + NADPH + H(+). The enzyme catalyses (E)-coniferol + NADP(+) = (E)-coniferaldehyde + NADPH + H(+). The catalysed reaction is (E)-sinapyl alcohol + NADP(+) = (E)-sinapaldehyde + NADPH + H(+). It catalyses the reaction (E)-4-coumaroyl alcohol + NADP(+) = (E)-4-coumaraldehyde + NADPH + H(+). It carries out the reaction (E)-caffeyl alcohol + NADP(+) = (E)-caffeyl aldehyde + NADPH + H(+). The enzyme catalyses vanillin + NADPH + H(+) = 4-hydroxy-3-methoxy-benzenemethanol + NADP(+). Its pathway is aromatic compound metabolism; phenylpropanoid biosynthesis. With respect to regulation, inhibited, in a concentration-dependent manner, by N-(O-hydroxyphenyl) sulfinamoyltertiobutyl acetate (OHPAS), a specific cinnamyl alcohol dehydrogenase (CAD) inhibitor, as well as by ethylenediaminetetraacetic acid (EDTA), a metalloenzyme inhibitor. Involved in the biosynthesis of capsinoids natural products (e.g. capsiate), non-pungent alkaloids synthesized from phenylpropanoid intermediates in the placental tissue of sweet chili pepper fruit acting as repellant on herbivorous mammals. Catalyzes the reduction of vanillin to generate vanillyl alcohol, a precursor of capsiate, a non-pungent component that accumulates mainly in the placenta of mature red fruits, but also in green fruits to lower levels. Involved in lignin biosynthesis. Catalyzes the final step specific for the production of lignin monomers. Mediates the conversion of cinnamaldehyde and coniferaldehyde to cinnamyl alcohol and coniferyl alcohol, respectively. Catalyzes the NADPH-dependent reduction of 5-hydroxyconiferaldehyde, sinapaldehyde, 4-coumaraldehyde and caffeyl aldehyde to their respective alcohols. The sequence is that of Cinnamyl alcohol dehydrogenase 1 from Capsicum annuum (Capsicum pepper).